We begin with the raw amino-acid sequence, 88 residues long: Small ribosomal subunit protein bS20 (88 aa).

A disordered region spans residues 1 to 23 (MANTSSAKKATRKIARRAAINKN).

It belongs to the bacterial ribosomal protein bS20 family.

In terms of biological role, binds directly to 16S ribosomal RNA. The protein is Small ribosomal subunit protein bS20 of Mesorhizobium japonicum (strain LMG 29417 / CECT 9101 / MAFF 303099) (Mesorhizobium loti (strain MAFF 303099)).